We begin with the raw amino-acid sequence, 495 residues long: Membrane-bound lytic murein transglycosylase F (495 aa).

The N-terminal stretch at 1 to 30 (MSRIRHHRFIQSCLVISTLLITLTGCQVES) is a signal peptide. Positions 31–270 (EPKTKLEQIR…LLEEKYFGHV (240 aa)) are non-LT domain. The LT domain stretch occupies residues 272-495 (SFDYVDTRAF…SVSQAIETKK (224 aa)). The active site involves Glu-315.

It in the N-terminal section; belongs to the bacterial solute-binding protein 3 family. In the C-terminal section; belongs to the transglycosylase Slt family.

The protein localises to the cell outer membrane. The catalysed reaction is Exolytic cleavage of the (1-&gt;4)-beta-glycosidic linkage between N-acetylmuramic acid (MurNAc) and N-acetylglucosamine (GlcNAc) residues in peptidoglycan, from either the reducing or the non-reducing ends of the peptidoglycan chains, with concomitant formation of a 1,6-anhydrobond in the MurNAc residue.. In terms of biological role, murein-degrading enzyme that degrades murein glycan strands and insoluble, high-molecular weight murein sacculi, with the concomitant formation of a 1,6-anhydromuramoyl product. Lytic transglycosylases (LTs) play an integral role in the metabolism of the peptidoglycan (PG) sacculus. Their lytic action creates space within the PG sacculus to allow for its expansion as well as for the insertion of various structures such as secretion systems and flagella. This Aliivibrio fischeri (strain ATCC 700601 / ES114) (Vibrio fischeri) protein is Membrane-bound lytic murein transglycosylase F.